The chain runs to 501 residues: GTPase Obg (501 aa).

The Obg domain occupies 2-159 (NRFIDRVVLH…HDLILELKSM (158 aa)). The region spanning 160-341 (ADVGLVGFPS…LKYKLLEIVQ (182 aa)) is the OBG-type G domain. Residues 166–173 (GFPSAGKS), 191–195 (FTTLQ), 212–215 (DVPG), 292–295 (NKAD), and 322–324 (SAV) each bind GTP. 2 residues coordinate Mg(2+): Ser-173 and Thr-193. One can recognise an OCT domain in the interval 362 to 442 (VDHRTKGQFQ…IGGISFEWEP (81 aa)).

It belongs to the TRAFAC class OBG-HflX-like GTPase superfamily. OBG GTPase family. In terms of assembly, monomer. The cofactor is Mg(2+).

The protein resides in the cytoplasm. Functionally, an essential GTPase which binds GTP, GDP and possibly (p)ppGpp with moderate affinity, with high nucleotide exchange rates and a fairly low GTP hydrolysis rate. Plays a role in control of the cell cycle, stress response, ribosome biogenesis and in those bacteria that undergo differentiation, in morphogenesis control. This chain is GTPase Obg, found in Corynebacterium glutamicum (strain R).